We begin with the raw amino-acid sequence, 123 residues long: Large ribosomal subunit protein uL14 (123 aa).

This sequence belongs to the universal ribosomal protein uL14 family. Part of the 50S ribosomal subunit. Forms a cluster with proteins L3 and L19. In the 70S ribosome, L14 and L19 interact and together make contacts with the 16S rRNA in bridges B5 and B8.

Binds to 23S rRNA. Forms part of two intersubunit bridges in the 70S ribosome. This Sodalis glossinidius (strain morsitans) protein is Large ribosomal subunit protein uL14.